Here is a 335-residue protein sequence, read N- to C-terminus: GTPase Obg (335 aa).

The Obg domain occupies 1–158 (MFVDQITLEL…RQVELELKLI (158 aa)). Residues 126–145 (NTFFKTSVNRAPTKATPGKP) form a disordered region. One can recognise an OBG-type G domain in the interval 159 to 334 (ADIGLVGFPN…LYRFFTQRLA (176 aa)). GTP contacts are provided by residues 165–172 (GFPNAGKS), 190–194 (FTTLA), 215–218 (DIPG), 285–288 (NKID), and 315–317 (SGL). The Mg(2+) site is built by S172 and T192.

It belongs to the TRAFAC class OBG-HflX-like GTPase superfamily. OBG GTPase family. As to quaternary structure, monomer. It depends on Mg(2+) as a cofactor.

The protein resides in the cytoplasm. An essential GTPase which binds GTP, GDP and possibly (p)ppGpp with moderate affinity, with high nucleotide exchange rates and a fairly low GTP hydrolysis rate. Plays a role in control of the cell cycle, stress response, ribosome biogenesis and in those bacteria that undergo differentiation, in morphogenesis control. This is GTPase Obg from Chlamydia pneumoniae (Chlamydophila pneumoniae).